Here is a 3177-residue protein sequence, read N- to C-terminus: Proliferation marker protein Ki-67 (3177 aa).

The FHA domain occupies 27–76; the sequence is CLFGRSIECDIRIQLPVVSKRHCKIEVKEQEAILYNFSSTNPTQVNGVTI. 2 stretches are compositionally biased toward basic and acidic residues: residues 98 to 107 and 116 to 126; these read EDGNHEDGSK and LGKEPSRRASR. 2 disordered regions span residues 98–442 and 473–572; these read EDGN…PGLS and RPEL…ASIS. Serine 125, serine 128, and serine 162 each carry phosphoserine. Polar residues-rich tracts occupy residues 165–177 and 202–221; these read SDGS…QDSS and STGS…LSNS. The segment covering 235–263 has biased composition (basic and acidic residues); the sequence is MKEELDVKSQKSCRKSEPQPDRAAEESRE. Residue lysine 236 forms a Glycyl lysine isopeptide (Lys-Gly) (interchain with G-Cter in SUMO2) linkage. Residues serine 250, serine 276, serine 277, serine 286, and serine 287 each carry the phosphoserine modification. Residues 276 to 286 are compositionally biased toward polar residues; it reads SSGSTPVTAAS. Phosphothreonine is present on residues threonine 307 and threonine 316. A phosphoserine mark is found at serine 321, serine 337, serine 373, serine 498, serine 503, and serine 588. Positions 455–618 are positively charged patch (CP); the sequence is KSEGMPMKRR…VKQTQTKVAK (164 aa). The 48-residue stretch at 462-509 folds into the PP1-binding domain; that stretch reads KRRRVSFGGHLRPELFDENLPPNTPLKRGETPTKRKSLGTHSPAVLKT. Residues 614 to 652 form a disordered region; the sequence is TKVAKHVPQKQTSKRQRRPSTPKKPTSNLHNQFTTGHAN. Residues 616–634 show a composition bias toward basic residues; sequence VAKHVPQKQTSKRQRRPST. Residues 636-652 show a composition bias toward polar residues; it reads KKPTSNLHNQFTTGHAN. Phosphothreonine is present on threonine 701. Disordered regions lie at residues 793–815, 835–901, and 956–989; these read LEKK…SKLR, VLAE…LGSQ, and KHSP…DKPI. The span at 855 to 864 shows a compositional bias: polar residues; it reads DQQVQDNENA. Composition is skewed to basic and acidic residues over residues 867 to 882 and 975 to 989; these read RCKE…EKTS and LKEH…DKPI. K167R repeat units follow at residues 994 to 1101, 1108 to 1216, 1228 to 1336, 1348 to 1450, 1461 to 1569, 1582 to 1684, 1696 to 1806, 1817 to 1925, 1937 to 2046, 2059 to 2163, 2175 to 2284, 2296 to 2405, 2419 to 2526, 2537 to 2639, 2643 to 2748, and 2762 to 2870; these read TRVL…FISP, KKIP…FQTP, SAKI…FQTP, SAKM…FQIP, KTKK…FQMP, TMLA…LFQT, KQTR…FQTP, ETTK…FQTP, VKMS…FQTP, SAKM…FQTP, SAKI…VFQT, AKLP…CQAP, KTPK…SFQE, KRIS…PIQT, and TQMP…ITQI. Residues lysine 1013 and lysine 1026 each participate in a glycyl lysine isopeptide (Lys-Gly) (interchain with G-Cter in SUMO2) cross-link. A Phosphoserine modification is found at serine 1062. Lysine 1082 is covalently cross-linked (Glycyl lysine isopeptide (Lys-Gly) (interchain with G-Cter in SUMO1); alternate). Lysine 1082 participates in a covalent cross-link: Glycyl lysine isopeptide (Lys-Gly) (interchain with G-Cter in SUMO2); alternate. Disordered regions lie at residues 1109 to 1321 and 1334 to 1410; these read KIPS…IRAQ and QTPA…ENDC. The residue at position 1114 (serine 1114) is a Phosphoserine. Polar residues predominate over residues 1114-1127; that stretch reads SPHTQPVRTPASTK. Threonine 1122 bears the Phosphothreonine mark. Phosphoserine is present on serine 1125. Position 1150 is a phosphothreonine (threonine 1150). Serine 1152 is modified (phosphoserine). Threonine 1159 and threonine 1175 each carry phosphothreonine. Serine 1189 bears the Phosphoserine mark. At threonine 1215 the chain carries Phosphothreonine. Residue serine 1235 is modified to Phosphoserine. Phosphothreonine is present on residues threonine 1243, threonine 1279, threonine 1295, threonine 1307, and threonine 1315. Residues 1308-1317 show a composition bias toward basic residues; sequence GHKRRPRTPK. Residue lysine 1317 forms a Glycyl lysine isopeptide (Lys-Gly) (interchain with G-Cter in SUMO2) linkage. At threonine 1335 the chain carries Phosphothreonine. Over residues 1353–1368 the composition is skewed to polar residues; that stretch reads LESSQAEPVKTPASTK. Serine 1356 carries the phosphoserine modification. The residue at position 1363 (threonine 1363) is a Phosphothreonine. The residue at position 1366 (serine 1366) is a Phosphoserine. Residues 1371–1384 show a composition bias toward basic and acidic residues; that stretch reads SKTDLSKVDVREDP. Threonine 1400 and threonine 1416 each carry phosphothreonine. Serine 1469 carries the phosphoserine modification. Residue threonine 1477 is modified to Phosphothreonine. Serine 1480 is subject to Phosphoserine. Threonine 1513 is modified (phosphothreonine). The tract at residues 1526 to 1550 is disordered; sequence RKPAKRKLDSTAGMPNSKRMRCSSK. A phosphoserine mark is found at serine 1542 and serine 1587. N6-acetyllysine is present on lysine 1609. Lysine 1668 is covalently cross-linked (Glycyl lysine isopeptide (Lys-Gly) (interchain with G-Cter in SUMO2)). 2 positions are modified to phosphothreonine: threonine 1684 and threonine 1712. Serine 1734 carries the phosphoserine modification. The segment at 1749–1797 is disordered; that stretch reads IPIGPEDDTENKGVKESTPQTLDSSASRTVSKRQQGAHEERPQFSGDLF. The segment covering 1765–1782 has biased composition (polar residues); that stretch reads STPQTLDSSASRTVSKRQ. Threonine 1766 carries the post-translational modification Phosphothreonine. Phosphoserine is present on serine 1779. Threonine 1805 is subject to Phosphothreonine. A Phosphoserine modification is found at serine 1825. Phosphothreonine occurs at positions 1859, 1868, 1884, and 1924. Residues 1925–2033 are disordered; sequence PAGASDPVSV…QTPKIRAQPL (109 aa). A Phosphoserine modification is found at serine 1944. Lysine 1966 bears the N6-acetyllysine mark. Phosphothreonine occurs at positions 1989, 2005, and 2025. A Glycyl lysine isopeptide (Lys-Gly) (interchain with G-Cter in SUMO1); alternate cross-link involves residue lysine 2027. Lysine 2027 participates in a covalent cross-link: Glycyl lysine isopeptide (Lys-Gly) (interchain with G-Cter in SUMO2); alternate. The residue at position 2045 (threonine 2045) is a Phosphothreonine. A disordered region spans residues 2047 to 2112; that stretch reads AGANDSVTVE…SPGTPAPVQE (66 aa). Residues 2063–2078 show a composition bias toward polar residues; it reads LESSQAEPVKTPASTK. The residue at position 2065 (serine 2065) is a Phosphoserine. Threonine 2073 is modified (phosphothreonine). Phosphoserine is present on residues serine 2076, serine 2095, and serine 2103. Residues 2088–2101 are compositionally biased toward basic and acidic residues; that stretch reads VDVREDPSILEKKT. Threonine 2106 and threonine 2122 each carry phosphothreonine. The tract at residues 2124–2343 is disordered; it reads KQKLDFTGNS…PLSKSSCASQ (220 aa). Over residues 2135–2144 the composition is skewed to basic residues; sequence GHKRRPRTPK. Threonine 2162 is modified (phosphothreonine). A compositionally biased stretch (polar residues) spans 2180-2195; that stretch reads LESSQAKPVKTPASTK. Serine 2182 carries the post-translational modification Phosphoserine. Threonine 2190 is modified (phosphothreonine). Position 2198 is a phosphoserine (serine 2198). Threonine 2218 carries the phosphothreonine modification. A Phosphoserine modification is found at serine 2220. Threonine 2227, threonine 2243, and threonine 2283 each carry phosphothreonine. The residue at position 2303 (serine 2303) is a Phosphoserine. Phosphothreonine is present on residues threonine 2311 and threonine 2348. Residues 2378–2390 are compositionally biased toward basic residues; that stretch reads RGKRQQRSCKKRS. Residues 2378–2447 form a disordered region; sequence RGKRQQRSCK…RRQARTGLRK (70 aa). 2 positions are modified to phosphoserine: serine 2390 and serine 2392. Threonine 2405 bears the Phosphothreonine mark. Phosphoserine occurs at positions 2423 and 2425. A Glycyl lysine isopeptide (Lys-Gly) (interchain with G-Cter in SUMO1) cross-link involves residue lysine 2451. Phosphoserine occurs at positions 2464, 2487, 2545, and 2592. Residues 2538-2547 show a composition bias toward basic and acidic residues; it reads TPKMPDKSPE. Disordered regions lie at residues 2538–2828 and 2879–3160; these read TPKM…QVSK and HDTS…DAKT. A compositionally biased stretch (polar residues) spans 2605–2622; it reads VQKQDPSVSLTGRRNQPR. Serine 2649 is modified (phosphoserine). 2 stretches are compositionally biased toward basic and acidic residues: residues 2673-2697 and 2704-2714; these read GVKE…KEPV and EEVKKSTKQKI. A Glycyl lysine isopeptide (Lys-Gly) (interchain with G-Cter in SUMO1); alternate cross-link involves residue lysine 2675. A Glycyl lysine isopeptide (Lys-Gly) (interchain with G-Cter in SUMO2); alternate cross-link involves residue lysine 2675. Composition is skewed to polar residues over residues 2764 to 2781 and 2883 to 2892; these read MPCN…QSSP and ILKSTQQQKP. Phosphoserine is present on residues serine 2768 and serine 2780. Residues 2907–2923 are compositionally biased toward basic and acidic residues; the sequence is ASKEDPKEVLVDTRDHA. Lysine 2909 is covalently cross-linked (Glycyl lysine isopeptide (Lys-Gly) (interchain with G-Cter in SUMO2)). Lysine 2928 carries the post-translational modification N6-acetyllysine. Basic and acidic residues predominate over residues 2959-2971; that stretch reads EATDEKPVPEKKR. An ATP-binding site is contributed by 2973-2980; it reads ASSKRHVS. Position 2980 is a phosphoserine (serine 2980). Over residues 3008–3018 the composition is skewed to basic and acidic residues; it reads KTEEMEAKREN. Position 3021 is a phosphothreonine (threonine 3021). The span at 3039–3057 shows a compositional bias: basic and acidic residues; that stretch reads PKFDASAENVGIKKNEKTM. The segment covering 3058 to 3067 has biased composition (polar residues); sequence KTASQETELQ. Phosphoserine is present on serine 3061. 2 stretches are compositionally biased toward basic and acidic residues: residues 3118–3132 and 3140–3160; these read PQEE…DVRC and VALD…DAKT.

Interacts with KIF15. Interacts (via the FHA domain) with NIFK. Interacts with PPP1CC. Component of a complex at least composed of ZNF335, HCFC1, CCAR2, EMSY, MKI67, RBBP5, ASH2L and WDR5; the complex is formed as a result of interactions between components of a nuclear receptor-mediated transcription complex and a histone methylation complex. Interacts with ZNF335. In terms of processing, hyperphosphorylated by CDK1 in mitosis; hyperphosphorylatiom prevents undergoing liquid-liquid phase separation. Dephosphorylated by PPP1CC at the onset of anaphase. Dephosphorylation by protein phosphatase 2A (PP2A) and simultaneous exposure of the positively charged patch (CP) during mitotic exit induce the RNA-dependent formation of a liquid-like condensed phase on the chromosome surface. Post-translationally, ubiquitinated by the APC/C complex after neuronal progenitors exit mitosis during brain development, leading to clearance from constitutive heterochromatin. In terms of tissue distribution, mainly present in proliferating cells (at protein level).

It is found in the chromosome. Its subcellular location is the nucleus. It localises to the nucleolus. Its function is as follows. Protein that associates with the surface of mitotic chromosomes and acts both as a chromosome repellent during early mitosis and chromosome attractant during late mitosis. Required to maintain individual mitotic chromosomes dispersed in the cytoplasm following nuclear envelope disassembly. During early mitosis, relocalizes from nucleoli to the chromosome surface where it forms extended brush structures that cover a substantial fraction of the chromosome surface. The MKI67 brush structure prevents chromosomes from collapsing into a single chromatin mass by forming a steric and electrostatic charge barrier: the protein has a high net electrical charge and acts as a surfactant, dispersing chromosomes and enabling independent chromosome motility. During mitotic anaphase, the MKI67 brush structure collapses and MKI67 switches from a chromosome repellent to a chromosome attractant to promote chromosome clustering and facilitate the exclusion of large cytoplasmic particles from the future nuclear space. Mechanistically, dephosphorylation during mitotic exit and simultaneous exposure of a conserved basic patch induce the RNA-dependent formation of a liquid-like condensed phase on the chromosome surface, promoting coalescence of neighboring chromosome surfaces and clustering of chromosomes. Binds premature ribosomal RNAs during anaphase; promoting liquid-liquid phase separation. Binds DNA, with a preference for supercoiled DNA and AT-rich DNA. Does not contribute to the internal structure of mitotic chromosomes. May play a role in chromatin organization; it is however unclear whether it plays a direct role in chromatin organization or whether it is an indirect consequence of its function in mitotic chromosome. The polypeptide is Proliferation marker protein Ki-67 (Mus musculus (Mouse)).